A 367-amino-acid polypeptide reads, in one-letter code: Small ribosomal subunit protein uS2 (367 aa).

A disordered region spans residues 1 to 68 (MPKKAEAKTG…NSTPSTGSKF (68 aa)). The span at 21 to 40 (AKKDVKAEVNETNKTAEKVS) shows a compositional bias: basic and acidic residues. Residues 53–66 (TNESSSNSTPSTGS) show a composition bias toward low complexity.

It belongs to the universal ribosomal protein uS2 family.

The chain is Small ribosomal subunit protein uS2 from Malacoplasma penetrans (strain HF-2) (Mycoplasma penetrans).